The primary structure comprises 183 residues: Inosine triphosphate pyrophosphatase (183 aa).

Residue 8–13 (TGNKNK) participates in ITP binding. Glu-36 lines the Mg(2+) pocket. ITP-binding positions include Lys-48, 64 to 65 (DT), Lys-81, 140 to 143 (FGWD), Lys-161, and 166 to 167 (HR).

The protein belongs to the HAM1 NTPase family. Homodimer. It depends on Mg(2+) as a cofactor. Mn(2+) is required as a cofactor.

Its subcellular location is the cytoplasm. It is found in the nucleus. The catalysed reaction is ITP + H2O = IMP + diphosphate + H(+). It catalyses the reaction dITP + H2O = dIMP + diphosphate + H(+). It carries out the reaction XTP + H2O = XMP + diphosphate + H(+). Its function is as follows. Pyrophosphatase that hydrolyzes non-canonical purine nucleotides such as inosine triphosphate (ITP), deoxyinosine triphosphate (dITP) or xanthosine 5'-triphosphate (XTP) to their respective monophosphate derivatives. The enzyme does not distinguish between the deoxy- and ribose forms. Probably excludes non-canonical purines from RNA and DNA precursor pools, thus preventing their incorporation into RNA and DNA and avoiding chromosomal lesions. The chain is Inosine triphosphate pyrophosphatase from Emericella nidulans (strain FGSC A4 / ATCC 38163 / CBS 112.46 / NRRL 194 / M139) (Aspergillus nidulans).